The chain runs to 868 residues: Probable inorganic carbon transporter subunit DabA (868 aa).

Zn(2+) is bound by residues Cys392, Asp394, His574, and Cys589.

It belongs to the inorganic carbon transporter (TC 9.A.2) DabA family. As to quaternary structure, forms a complex with DabB. Requires Zn(2+) as cofactor.

It localises to the cell membrane. In terms of biological role, part of an energy-coupled inorganic carbon pump. This Bacillus cereus (strain G9842) protein is Probable inorganic carbon transporter subunit DabA.